Consider the following 150-residue polypeptide: Large ribosomal subunit protein bL9 (150 aa).

Belongs to the bacterial ribosomal protein bL9 family.

Its function is as follows. Binds to the 23S rRNA. This is Large ribosomal subunit protein bL9 from Shewanella baltica (strain OS223).